The chain runs to 511 residues: 2-isopropylmalate synthase (511 aa).

One can recognise a Pyruvate carboxyltransferase domain in the interval 6-269; the sequence is IIIFDTTLRD…YTDIKCENIF (264 aa). Mn(2+) contacts are provided by Asp15, His203, His205, and Asn239. Residues 394-511 form a regulatory domain region; that stretch reads VLEKLSVISG…SLKVEERKMA (118 aa).

This sequence belongs to the alpha-IPM synthase/homocitrate synthase family. LeuA type 1 subfamily. In terms of assembly, homodimer. Mn(2+) is required as a cofactor.

It is found in the cytoplasm. The enzyme catalyses 3-methyl-2-oxobutanoate + acetyl-CoA + H2O = (2S)-2-isopropylmalate + CoA + H(+). Its pathway is amino-acid biosynthesis; L-leucine biosynthesis; L-leucine from 3-methyl-2-oxobutanoate: step 1/4. Its function is as follows. Catalyzes the condensation of the acetyl group of acetyl-CoA with 3-methyl-2-oxobutanoate (2-ketoisovalerate) to form 3-carboxy-3-hydroxy-4-methylpentanoate (2-isopropylmalate). In Campylobacter jejuni subsp. jejuni serotype O:2 (strain ATCC 700819 / NCTC 11168), this protein is 2-isopropylmalate synthase.